The chain runs to 434 residues: ATP-sensitive inward rectifier potassium channel 14 (434 aa).

At 1-81 (MGLARALRRL…LSDLFTTCVD (81 aa)) the chain is on the cytoplasmic side. The residue at position 79 (Cys-79) is an S-nitrosocysteine. The helical transmembrane segment at 82–108 (VRWRWMCLLFSCSFLASWLLFGLTFWL) threads the bilayer. Over 109-131 (IASLHGDLAAPPPPAPCFSQVAS) the chain is Extracellular. An intramembrane region (helical; Pore-forming) is located at residues 132–148 (FLAAFLFALETQTSIGY). The Selectivity filter signature appears at 145–150 (SIGYGV). Residues 149 to 157 (GVRSVTEEC) are Extracellular-facing. Residues 158–185 (PAAVAAVVLQCIAGCVLDAFVVGAVMAK) traverse the membrane as a helical segment. Topologically, residues 186–434 (MAKPKKRNET…TPTLALTLPP (249 aa)) are cytoplasmic. Positions 398–434 (QEEDEEEDTKEGTSAETPERAASPQALTPTLALTLPP) are disordered. Residues 407 to 416 (KEGTSAETPE) show a composition bias toward basic and acidic residues. A compositionally biased stretch (low complexity) spans 418–434 (AASPQALTPTLALTLPP).

Belongs to the inward rectifier-type potassium channel (TC 1.A.2.1) family. KCNJ14 subfamily.

It is found in the membrane. The catalysed reaction is K(+)(in) = K(+)(out). With respect to regulation, channel activity is regulated by variations of cytosolic pH; channels are activated by alkaline and inhibited by acidic pH values. Inhibited by Ba(2+) and Cs(+) in a voltage-dependent manner; sensitivity to those inhibitors is lower than in other Kir channels. In terms of biological role, inward rectifier potassium channels are characterized by a greater tendency to allow potassium to flow into the cell rather than out of it. Their voltage dependence is regulated by the concentration of extracellular potassium; as external potassium is raised, the voltage range of the channel opening shifts to more positive voltages. This is ATP-sensitive inward rectifier potassium channel 14 (Kcnj14) from Mus musculus (Mouse).